Reading from the N-terminus, the 168-residue chain is Lipoprotein signal peptidase (168 aa).

3 consecutive transmembrane segments (helical) span residues 8–28 (TLLV…VVLL), 70–90 (KYFL…YLFF), and 104–124 (VLLC…GHIV). Catalysis depends on residues Asp-125 and Asp-143. Residues 134-154 (WAFPTFNVADVLISLGTLLLV) traverse the membrane as a helical segment.

The protein belongs to the peptidase A8 family.

It localises to the cell inner membrane. It carries out the reaction Release of signal peptides from bacterial membrane prolipoproteins. Hydrolyzes -Xaa-Yaa-Zaa-|-(S,diacylglyceryl)Cys-, in which Xaa is hydrophobic (preferably Leu), and Yaa (Ala or Ser) and Zaa (Gly or Ala) have small, neutral side chains.. Its pathway is protein modification; lipoprotein biosynthesis (signal peptide cleavage). Its function is as follows. This protein specifically catalyzes the removal of signal peptides from prolipoproteins. In Chlamydia pneumoniae (Chlamydophila pneumoniae), this protein is Lipoprotein signal peptidase.